The following is a 178-amino-acid chain: Extracellular fatty acid-binding protein (178 aa).

Residues 1-20 (MRTLALSLALALLCLLHTEA) form the signal peptide. At A21 the chain carries Blocked amino end (Ala). An enterobactin-binding site is contributed by T43. Residues Y72 and K104 each coordinate 1-tetradecanoyl-sn-glycerol 3-phosphate. Residues C80 and C173 are joined by a disulfide bond. Residues K104, R123, and R134 each contribute to the enterobactin site. Residue 134–136 (RLY) coordinates 1-tetradecanoyl-sn-glycerol 3-phosphate.

Belongs to the calycin superfamily. Lipocalin family. Monomer. In terms of processing, does not seem to be glycosylated. Expressed in egg white (at protein level). Expressed in the magnum of the oviduct (at protein level). Preferentially synthesized in nonproliferating cells.

It is found in the secreted. Siderocalin-like lipocalin tightly binding a variety of bacterial ferric siderophores, also binds long-chain unsaturated fatty acids such as linoleic acid, oleic acid, arachidonic acid and, with a lower affinity, long chain saturated fatty acids such as steraic acid. May act as an antibacterial factor, through dual ligand specificity, both as a siderophore-sequestrating molecule and a lysophosphatidic acid (LPA) sensor. The polypeptide is Extracellular fatty acid-binding protein (EXFABP) (Gallus gallus (Chicken)).